The primary structure comprises 313 residues: uncharacterized protein (313 aa).

Residue 29 to 61 (ALVTGGGTGLGKAIATTFAHLGASVAIAARRLD) participates in NADP(+) binding.

The protein belongs to the short-chain dehydrogenases/reductases (SDR) family. 2,4-dienoyl-CoA reductase subfamily.

This is an uncharacterized protein from Caenorhabditis elegans.